The chain runs to 72 residues: UPF0729 protein C18orf32 homolog (72 aa).

The segment at 1 to 33 (MVCIPCIVIPVLLWIFKKFLEPYIYPVVSRIWP) is necessary for its localzation to the endoplasmic reticulum and lipid droplets. Residues 36–72 (AVQQSGDKNMSKVDCKGAGTNGLPTKGPTEVSDKKKD) form a disordered region.

Belongs to the UPF0729 family. As to quaternary structure, interacts with DERL1 and AMFR. Undergoes ER-associated degradation (ERAD).

The protein localises to the endoplasmic reticulum. It is found in the lipid droplet. Its function is as follows. May activate the NF-kappa-B signaling pathway. This is UPF0729 protein C18orf32 homolog from Mus musculus (Mouse).